A 1551-amino-acid chain; its full sequence is ABC-type transporter phomO (1551 aa).

The next 7 membrane-spanning stretches (helical) occupy residues 34–54 (LYFE…LLAA), 110–130 (CTAG…CTTV), 139–159 (SVPA…LAHF), 172–192 (SSSL…APLV), 202–222 (GSAL…LIAV), 314–334 (LGLY…FTLA), and 358–378 (GLIG…GWYW). An ABC transmembrane type-1 1 domain is found at 326–599 (LCLAGFTLAQ…LLQIIPSFGA (274 aa)). An N-linked (GlcNAc...) asparagine glycan is attached at asparagine 384. Transmembrane regions (helical) follow at residues 428 to 448 (LAYA…TWML), 452 to 472 (VGPP…ASTY), 535 to 555 (LIVG…VLVF), and 577 to 597 (LIWI…IPSF). The 217-residue stretch at 645–861 (IHNSSFSYTD…VEDENGDVDN (217 aa)) folds into the ABC transporter 1 domain. N-linked (GlcNAc...) asparagine glycosylation occurs at asparagine 647. 678–685 (GPAGCGKS) contributes to the ATP binding site. Asparagine 721 carries N-linked (GlcNAc...) asparagine glycosylation. A disordered region spans residues 843–889 (YQFPPSQADVEDENGDVDNGAENTRPRESSHTTEAQSGPPEPKSKPT). Helical transmembrane passes span 903 to 923 (SIGF…AFCL), 959 to 979 (VLPL…IVPL), 1027 to 1044 (LFNT…VILI), and 1137 to 1157 (LVLN…AVGL). The region spanning 910 to 1199 (VLFIGGGIIF…LLTAWTSLET (290 aa)) is the ABC transmembrane type-1 2 domain. Asparagine 1179 is a glycosylation site (N-linked (GlcNAc...) asparagine). Positions 1219–1228 (DVLVRPDSLD) are enriched in basic and acidic residues. Residues 1219-1296 (DVLVRPDSLD…HEATTITTTS (78 aa)) form a disordered region. Residues 1259-1270 (YDDDDESDENTD) show a composition bias toward acidic residues. One can recognise an ABC transporter 2 domain in the interval 1287–1535 (HEATTITTTS…SDIFAFFGRS (249 aa)). 1323–1330 (GRTGSGKS) is an ATP binding site. N-linked (GlcNAc...) asparagine glycosylation is present at asparagine 1486.

The protein belongs to the ABC transporter superfamily. ABCC family. Conjugate transporter (TC 3.A.1.208) subfamily.

It localises to the membrane. In terms of biological role, ABC-type transporter; part of the gene cluster that mediates the biosynthesis of the phomopsins, a group of hexapeptide mycotoxins which infects lupins and causes lupinosis disease in livestock. This is ABC-type transporter phomO from Diaporthe leptostromiformis (Lupinosis disease fungus).